Reading from the N-terminus, the 124-residue chain is Type-4 ice-structuring protein (124 aa).

The first 20 residues, 1–20, serve as a signal peptide directing secretion; the sequence is MKFSLIAAVALLALAQGSFA. Glutamine 21 is modified (pyrrolidone carboxylic acid).

This sequence belongs to the apolipoprotein A1/A4/E family.

The protein resides in the secreted. In terms of biological role, antifreeze proteins lower the blood freezing point. The polypeptide is Type-4 ice-structuring protein (Paralichthys olivaceus (Bastard halibut)).